The primary structure comprises 171 residues: Shikimate kinase (171 aa).

ATP is bound at residue 14–19 (GAGKST). Ser-18 contacts Mg(2+). 3 residues coordinate substrate: Asp-36, Arg-60, and Gly-82. ATP is bound at residue Arg-120. Position 139 (Arg-139) interacts with substrate. Gln-156 contributes to the ATP binding site.

It belongs to the shikimate kinase family. As to quaternary structure, monomer. The cofactor is Mg(2+).

It localises to the cytoplasm. The catalysed reaction is shikimate + ATP = 3-phosphoshikimate + ADP + H(+). The protein operates within metabolic intermediate biosynthesis; chorismate biosynthesis; chorismate from D-erythrose 4-phosphate and phosphoenolpyruvate: step 5/7. Catalyzes the specific phosphorylation of the 3-hydroxyl group of shikimic acid using ATP as a cosubstrate. This chain is Shikimate kinase, found in Shewanella frigidimarina (strain NCIMB 400).